Consider the following 338-residue polypeptide: MENLDALVSQALEAVQQSEDVNALEQLRVQYLGKKGELTALMQTLGKLSAEERPQAGALINTAKNQVQDALNARKSVLEQALLAEKLASERIDVTLPGRGQTSGGLHPVTRTLERVEQFFTHIGYSVAEGPEVEDDYHNFEALNIPGHHPARAMHDTFYFNANMLLRTHTSPVQVRTMESQQPPIRIVCPGRVYRCDSDITHSPMFHQVEGLLVDEGISFADLKGTIEEFLRVFFEKPLGVRFRPSFFPFTEPSAEVDMQCVMCSGKGCRVCKQTGWLEVMGCGMVHPNVLRMSGIDPEKYSGFAFGMGVERLAMLRYGVNDLRLFFDNDLRFLAQFR.

Glu-252 contacts Mg(2+).

This sequence belongs to the class-II aminoacyl-tRNA synthetase family. Phe-tRNA synthetase alpha subunit type 1 subfamily. Tetramer of two alpha and two beta subunits. Mg(2+) serves as cofactor.

The protein localises to the cytoplasm. It catalyses the reaction tRNA(Phe) + L-phenylalanine + ATP = L-phenylalanyl-tRNA(Phe) + AMP + diphosphate + H(+). The polypeptide is Phenylalanine--tRNA ligase alpha subunit (Ectopseudomonas mendocina (strain ymp) (Pseudomonas mendocina)).